We begin with the raw amino-acid sequence, 375 residues long: MDIEERINLVLKKPTEEVLTVENLRHLFEIGAPLQHYIGFEISGYIHLGTGLMAGAKIADFQKAGIKTRVFLADWHSWINDKLGGDLEVIQEVALKYFKVGMEKSIEVMGGDPKKVEFVLASEILEKGDYWQTVIDISKNVTLSRVMRSITIMGRQMGEAIDFAKLIYPMMQVADIFYQGVTIAHAGMDQRKAHVIAIEVAQKLRYHPIVHEGEKLKPVAVHHHLLLGLQEPPKWPIESEEEFKEIKAQMKMSKSKPYSAVFIHDSPEEIRQKLRKAFCPAREVRYNPVLDWVEYIIFREEPTEFTVHRPAKFGGDVTYTTFEELKRDFAEGKLHPLDLKNAVAEYLINLLEPIRRYFEKHPEPLELMRSVKITR.

L-tyrosine is bound by residues Y37, Y168, Q172, D175, and Q190. A 'KMSKS' region motif is present at residues 251 to 255 (KMSKS). Residue K254 coordinates ATP.

This sequence belongs to the class-I aminoacyl-tRNA synthetase family. TyrS type 4 subfamily. Homodimer.

The protein resides in the cytoplasm. It catalyses the reaction tRNA(Tyr) + L-tyrosine + ATP = L-tyrosyl-tRNA(Tyr) + AMP + diphosphate + H(+). Catalyzes the attachment of tyrosine to tRNA(Tyr) in a two-step reaction: tyrosine is first activated by ATP to form Tyr-AMP and then transferred to the acceptor end of tRNA(Tyr). The sequence is that of Tyrosine--tRNA ligase from Pyrococcus horikoshii (strain ATCC 700860 / DSM 12428 / JCM 9974 / NBRC 100139 / OT-3).